The sequence spans 564 residues: Dihydroxy-acid dehydratase (564 aa).

Position 50 (C50) interacts with [2Fe-2S] cluster. D82 contacts Mg(2+). C123 is a binding site for [2Fe-2S] cluster. 2 residues coordinate Mg(2+): D124 and K125. An N6-carboxylysine modification is found at K125. C195 is a binding site for [2Fe-2S] cluster. Residue E447 coordinates Mg(2+). S473 functions as the Proton acceptor in the catalytic mechanism.

This sequence belongs to the IlvD/Edd family. In terms of assembly, homodimer. It depends on [2Fe-2S] cluster as a cofactor. The cofactor is Mg(2+).

The enzyme catalyses (2R)-2,3-dihydroxy-3-methylbutanoate = 3-methyl-2-oxobutanoate + H2O. It carries out the reaction (2R,3R)-2,3-dihydroxy-3-methylpentanoate = (S)-3-methyl-2-oxopentanoate + H2O. It functions in the pathway amino-acid biosynthesis; L-isoleucine biosynthesis; L-isoleucine from 2-oxobutanoate: step 3/4. Its pathway is amino-acid biosynthesis; L-valine biosynthesis; L-valine from pyruvate: step 3/4. Functionally, functions in the biosynthesis of branched-chain amino acids. Catalyzes the dehydration of (2R,3R)-2,3-dihydroxy-3-methylpentanoate (2,3-dihydroxy-3-methylvalerate) into 2-oxo-3-methylpentanoate (2-oxo-3-methylvalerate) and of (2R)-2,3-dihydroxy-3-methylbutanoate (2,3-dihydroxyisovalerate) into 2-oxo-3-methylbutanoate (2-oxoisovalerate), the penultimate precursor to L-isoleucine and L-valine, respectively. This chain is Dihydroxy-acid dehydratase, found in Chloroflexus aggregans (strain MD-66 / DSM 9485).